Consider the following 331-residue polypeptide: UDP-GalNAc:beta-1,3-N-acetylgalactosaminyltransferase 1 (331 aa).

At 1 to 20 (MAPALPITLPSKMSLRSLKW) the chain is on the cytoplasmic side. The chain crosses the membrane as a helical; Signal-anchor for type II membrane protein span at residues 21 to 43 (SLLLLSLLSFLVMWYLSLPHYNV). Topologically, residues 44-331 (IERVNWMYFY…VMLRNTTCHY (288 aa)) are lumenal. 5 N-linked (GlcNAc...) asparagine glycosylation sites follow: Asn-72, Asn-154, Asn-198, Asn-212, and Asn-326.

It belongs to the glycosyltransferase 31 family. Requires Mg(2+) as cofactor.

Its subcellular location is the golgi apparatus membrane. It carries out the reaction a globoside Gb3Cer (d18:1(4E)) + UDP-N-acetyl-alpha-D-galactosamine = a globoside Gb4Cer (d18:1(4E)) + UDP + H(+). It functions in the pathway protein modification; protein glycosylation. In terms of biological role, transfers N-acetylgalactosamine onto globotriaosylceramide. Plays a critical role in preimplantation stage embryonic development. The protein is UDP-GalNAc:beta-1,3-N-acetylgalactosaminyltransferase 1 (B3GALNT1) of Sus scrofa (Pig).